Consider the following 88-residue polypeptide: Small ribosomal subunit protein bS20 (88 aa).

It belongs to the bacterial ribosomal protein bS20 family.

Its function is as follows. Binds directly to 16S ribosomal RNA. The polypeptide is Small ribosomal subunit protein bS20 (Heliobacterium modesticaldum (strain ATCC 51547 / Ice1)).